The chain runs to 157 residues: SUMO-conjugating enzyme UBC9-B (157 aa).

The UBC core domain maps to 4-157 (IALSRLAQER…VRAQAKKFSP (154 aa)). Positions 13-18 (RKAWRK) are interaction with SUMO1. The active-site Glycyl thioester intermediate is Cys-93.

This sequence belongs to the ubiquitin-conjugating enzyme family. As to quaternary structure, forms a tight complex with rangap1 and ranbp2. Interacts with vsx1.

The protein resides in the nucleus. Its pathway is protein modification; protein sumoylation. In terms of biological role, accepts the ubiquitin-like proteins sumo1, sumo2 and sumo3 from the uble1a-uble1b E1 complex and catalyzes their covalent attachment to other proteins with the help of an E3 ligase such as ranbp2 or cbx4. Essential for nuclear architecture and chromosome segregation. Mediates nuclear localization of vsx1. Required for progression through mitosis during organogenesis. The polypeptide is SUMO-conjugating enzyme UBC9-B (ube2ib) (Danio rerio (Zebrafish)).